The sequence spans 808 residues: Leucine--tRNA ligase (808 aa).

The short motif at 40–51 is the 'HIGH' region element; the sequence is PYPSGQGLHVGH. Positions 580 to 584 match the 'KMSKS' region motif; it reads KMSKS. Lysine 583 lines the ATP pocket.

Belongs to the class-I aminoacyl-tRNA synthetase family.

It localises to the cytoplasm. It carries out the reaction tRNA(Leu) + L-leucine + ATP = L-leucyl-tRNA(Leu) + AMP + diphosphate. The chain is Leucine--tRNA ligase from Leuconostoc mesenteroides subsp. mesenteroides (strain ATCC 8293 / DSM 20343 / BCRC 11652 / CCM 1803 / JCM 6124 / NCDO 523 / NBRC 100496 / NCIMB 8023 / NCTC 12954 / NRRL B-1118 / 37Y).